A 181-amino-acid polypeptide reads, in one-letter code: LEM domain-containing protein 1 (181 aa).

Residues 1–45 (MVDVKCLSDCKLQNQLEKLGFSPGPILPSTRKLYEKKLVQLLVSP) enclose the LEM domain. Residues 152–172 (FPVGLKLAVLGIFIIVVFVYL) traverse the membrane as a helical; Signal-anchor for type II membrane protein segment.

As to expression, testis-specific. Isoform 6 is detected in 17 of 18 colon cancer tissues examined.

Its subcellular location is the membrane. This Homo sapiens (Human) protein is LEM domain-containing protein 1 (LEMD1).